The primary structure comprises 711 residues: Interferon-induced GTP-binding protein Mx2 (711 aa).

Positions 115 to 387 constitute a Dynamin-type G domain; it reads DLALPAIAVI…LILHINKSLP (273 aa). Positions 125-132 are G1 motif; sequence GDQSSGKS. 125-132 contacts GTP; the sequence is GDQSSGKS. Residues 150 to 152 are G2 motif; the sequence is VTR. A G3 motif region spans residues 225 to 228; that stretch reads DLPG. Residues 225-229 and 294-297 contribute to the GTP site; these read DLPGI and TKPD. The tract at residues 294–297 is G4 motif; the sequence is TKPD. The tract at residues 326–329 is G5 motif; it reads RCRG. The region spanning 623–711 is the GED domain; it reads NDEIGVHLNA…ARRALYMFFS (89 aa).

This sequence belongs to the TRAFAC class dynamin-like GTPase superfamily. Dynamin/Fzo/YdjA family.

It is found in the cytoplasm. The protein localises to the nucleus. Its function is as follows. Interferon-induced dynamin-like GTPase with antiviral activity against vesicular stomatitis virus (VSV). This chain is Interferon-induced GTP-binding protein Mx2 (MX2), found in Canis lupus familiaris (Dog).